We begin with the raw amino-acid sequence, 557 residues long: 2-isopropylmalate synthase (557 aa).

A Pyruvate carboxyltransferase domain is found at 33 to 307 (PIWCSSDLRD…DPQLDFSDID (275 aa)). Asp-42, His-246, His-248, and Asn-282 together coordinate Mg(2+). Residues 439 to 557 (ANAPYALVSH…SLSQQEAKAA (119 aa)) are regulatory domain.

This sequence belongs to the alpha-IPM synthase/homocitrate synthase family. LeuA type 2 subfamily. In terms of assembly, homodimer. The cofactor is Mg(2+).

The protein localises to the cytoplasm. The catalysed reaction is 3-methyl-2-oxobutanoate + acetyl-CoA + H2O = (2S)-2-isopropylmalate + CoA + H(+). Its pathway is amino-acid biosynthesis; L-leucine biosynthesis; L-leucine from 3-methyl-2-oxobutanoate: step 1/4. In terms of biological role, catalyzes the condensation of the acetyl group of acetyl-CoA with 3-methyl-2-oxobutanoate (2-ketoisovalerate) to form 3-carboxy-3-hydroxy-4-methylpentanoate (2-isopropylmalate). The chain is 2-isopropylmalate synthase from Pseudomonas putida (strain GB-1).